Consider the following 317-residue polypeptide: E3 ubiquitin-protein ligase NRDP1 (317 aa).

An RING-type; degenerate zinc finger spans residues 18-57; sequence CPICSGVLEEPVQAPHCEHAFCNACITQWFSQQQTCPVDR. The stretch at 135 to 175 forms a coiled coil; that stretch reads IKHLRSVVQQQQIRIGELEKTAAESKHQLSEQKRDIQLLKA.

The catalysed reaction is S-ubiquitinyl-[E2 ubiquitin-conjugating enzyme]-L-cysteine + [acceptor protein]-L-lysine = [E2 ubiquitin-conjugating enzyme]-L-cysteine + N(6)-ubiquitinyl-[acceptor protein]-L-lysine.. It participates in protein modification; protein ubiquitination. Acts as E3 ubiquitin-protein ligase and regulates the degradation of target proteins. This is E3 ubiquitin-protein ligase NRDP1 (rnf41) from Xenopus laevis (African clawed frog).